Here is a 236-residue protein sequence, read N- to C-terminus: Rab-like protein 3 (236 aa).

A small GTPase-like region spans residues 1–235 (MASLDRVKVL…GGGALKNFHC (235 aa)). GTP-binding positions include 16–21 (GVGKSS), 148–150 (KLD), and 179–180 (DC).

It belongs to the small GTPase superfamily. Rab family. Homodimer. Interacts with GPR89; the interaction stabilizes GPR89. Interacts with RAP1GDS1.

In terms of biological role, required for KRAS signaling regulation and modulation of cell proliferation. Regulator of KRAS prenylation, and probably prenylation of other small GTPases. Required for lymphocyte development and function. Not required for myeloid cell development. This chain is Rab-like protein 3 (Rabl3), found in Mus musculus (Mouse).